The following is a 117-amino-acid chain: Large ribosomal subunit protein bL20 (117 aa).

The protein belongs to the bacterial ribosomal protein bL20 family.

Functionally, binds directly to 23S ribosomal RNA and is necessary for the in vitro assembly process of the 50S ribosomal subunit. It is not involved in the protein synthesizing functions of that subunit. In Oleidesulfovibrio alaskensis (strain ATCC BAA-1058 / DSM 17464 / G20) (Desulfovibrio alaskensis), this protein is Large ribosomal subunit protein bL20.